The primary structure comprises 246 residues: 2,3-bisphosphoglycerate-dependent phosphoglycerate mutase (246 aa).

Substrate contacts are provided by residues 9–16, 22–23, arginine 61, 88–91, lysine 99, 115–116, and 181–182; these read RHGQSAWN, TG, ERHY, RR, and GN. The active-site Tele-phosphohistidine intermediate is the histidine 10. Residue glutamate 88 is the Proton donor/acceptor of the active site.

It belongs to the phosphoglycerate mutase family. BPG-dependent PGAM subfamily.

The enzyme catalyses (2R)-2-phosphoglycerate = (2R)-3-phosphoglycerate. Its pathway is carbohydrate degradation; glycolysis; pyruvate from D-glyceraldehyde 3-phosphate: step 3/5. Functionally, catalyzes the interconversion of 2-phosphoglycerate and 3-phosphoglycerate. This Bifidobacterium longum (strain DJO10A) protein is 2,3-bisphosphoglycerate-dependent phosphoglycerate mutase.